We begin with the raw amino-acid sequence, 379 residues long: UDP-4-amino-4-deoxy-L-arabinose--oxoglutarate aminotransferase (379 aa).

Lysine 182 is subject to N6-(pyridoxal phosphate)lysine.

Belongs to the DegT/DnrJ/EryC1 family. ArnB subfamily. Homodimer. It depends on pyridoxal 5'-phosphate as a cofactor.

It catalyses the reaction UDP-4-amino-4-deoxy-beta-L-arabinose + 2-oxoglutarate = UDP-beta-L-threo-pentopyranos-4-ulose + L-glutamate. It participates in nucleotide-sugar biosynthesis; UDP-4-deoxy-4-formamido-beta-L-arabinose biosynthesis; UDP-4-deoxy-4-formamido-beta-L-arabinose from UDP-alpha-D-glucuronate: step 2/3. It functions in the pathway bacterial outer membrane biogenesis; lipopolysaccharide biosynthesis. Functionally, catalyzes the conversion of UDP-4-keto-arabinose (UDP-Ara4O) to UDP-4-amino-4-deoxy-L-arabinose (UDP-L-Ara4N). The modified arabinose is attached to lipid A and is required for resistance to polymyxin and cationic antimicrobial peptides. The protein is UDP-4-amino-4-deoxy-L-arabinose--oxoglutarate aminotransferase of Klebsiella pneumoniae (strain 342).